The following is a 158-amino-acid chain: HVA22-like protein f (158 aa).

A run of 3 helical transmembrane segments spans residues 2–22, 41–61, and 63–83; these read GFIIAIAKRFDALVGPGVMLL, QQWLTYWIIYSLITIFELSVW, and VLAWLPFWPYLKLLFCMWLVL.

The protein belongs to the DP1 family.

It localises to the membrane. In Arabidopsis thaliana (Mouse-ear cress), this protein is HVA22-like protein f (HVA22F).